The sequence spans 186 residues: ATP synthase subunit delta (186 aa).

It belongs to the ATPase delta chain family. As to quaternary structure, F-type ATPases have 2 components, F(1) - the catalytic core - and F(0) - the membrane proton channel. F(1) has five subunits: alpha(3), beta(3), gamma(1), delta(1), epsilon(1). CF(0) has four main subunits: a(1), b(1), b'(1) and c(10-14). The alpha and beta chains form an alternating ring which encloses part of the gamma chain. F(1) is attached to F(0) by a central stalk formed by the gamma and epsilon chains, while a peripheral stalk is formed by the delta, b and b' chains.

The protein resides in the cell inner membrane. F(1)F(0) ATP synthase produces ATP from ADP in the presence of a proton or sodium gradient. F-type ATPases consist of two structural domains, F(1) containing the extramembraneous catalytic core and F(0) containing the membrane proton channel, linked together by a central stalk and a peripheral stalk. During catalysis, ATP synthesis in the catalytic domain of F(1) is coupled via a rotary mechanism of the central stalk subunits to proton translocation. In terms of biological role, this protein is part of the stalk that links CF(0) to CF(1). It either transmits conformational changes from CF(0) to CF(1) or is implicated in proton conduction. This chain is ATP synthase subunit delta, found in Cereibacter sphaeroides (strain ATCC 17025 / ATH 2.4.3) (Rhodobacter sphaeroides).